Consider the following 227-residue polypeptide: Enolase-phosphatase E1 (227 aa).

The Mg(2+) site is built by Asp11 and Glu13. Substrate is bound by residues 118 to 119 (SS) and Lys161. Asp186 contributes to the Mg(2+) binding site.

Belongs to the HAD-like hydrolase superfamily. MasA/MtnC family. Monomer. Mg(2+) serves as cofactor.

It is found in the cytoplasm. The protein resides in the nucleus. It catalyses the reaction 5-methylsulfanyl-2,3-dioxopentyl phosphate + H2O = 1,2-dihydroxy-5-(methylsulfanyl)pent-1-en-3-one + phosphate. Its pathway is amino-acid biosynthesis; L-methionine biosynthesis via salvage pathway; L-methionine from S-methyl-5-thio-alpha-D-ribose 1-phosphate: step 3/6. The protein operates within amino-acid biosynthesis; L-methionine biosynthesis via salvage pathway; L-methionine from S-methyl-5-thio-alpha-D-ribose 1-phosphate: step 4/6. Functionally, bifunctional enzyme that catalyzes the enolization of 2,3-diketo-5-methylthiopentyl-1-phosphate (DK-MTP-1-P) into the intermediate 2-hydroxy-3-keto-5-methylthiopentenyl-1-phosphate (HK-MTPenyl-1-P), which is then dephosphorylated to form the acireductone 1,2-dihydroxy-3-keto-5-methylthiopentene (DHK-MTPene). The sequence is that of Enolase-phosphatase E1 from Saccharomyces cerevisiae (strain RM11-1a) (Baker's yeast).